The chain runs to 651 residues: Epithelial sodium channel subunit beta (651 aa).

The Cytoplasmic segment spans residues 1–50 (MFLKRWFIRALHRLQKGPGYGYSELFVWYCNNTNTHGPKRLIIEGPKKKT). Residues 51 to 71 (LWSLFTVTFACLVFWQWGLLI) form a helical membrane-spanning segment. The Extracellular segment spans residues 72-541 (QTYLSWGVSV…GGQFGFWMGG (470 aa)). 8 cysteine pairs are disulfide-bonded: C98–C281, C205–C212, C258–C265, C370–C457, C395–C453, C399–C449, C408–C435, and C410–C424. The helical transmembrane segment at 542 to 562 (SVLCIIEFGEVFIDCIWIAVI) threads the bilayer. The Cytoplasmic portion of the chain corresponds to 563-651 (RFVKWYKNRK…TEHHSDSEDL (89 aa)). Positions 612 to 651 (QPPDLYLPTTLEIPGTPPPKYDSLRVHPIDTEHHSDSEDL) are disordered. The span at 633 to 651 (DSLRVHPIDTEHHSDSEDL) shows a compositional bias: basic and acidic residues.

Belongs to the amiloride-sensitive sodium channel (TC 1.A.6) family. SCNN1B subfamily. As to quaternary structure, component of the heterotrimeric epithelial sodium channel (ENaC) composed of an alpha/SCNN1A, a beta/SCNN1B and a gamma/SCNN1G subunit. Strongly expressed in gill, kidney and rectum and more weakly in brain, eye, liver and muscle.

The protein resides in the apical cell membrane. Its subcellular location is the cytoplasmic vesicle membrane. The enzyme catalyses Na(+)(in) = Na(+)(out). Its activity is regulated as follows. Originally identified and characterized by its inhibition by the diuretic drug amiloride. In terms of biological role, this is one of the three pore-forming subunits of the heterotrimeric epithelial sodium channel (ENaC), a critical regulator of sodium balance and fluid homeostasis. ENaC operates in epithelial tissues, where it mediates the electrodiffusion of sodium ions from extracellular fluid through the apical membrane of cells, with water following osmotically. This Neoceratodus forsteri (Australian lungfish) protein is Epithelial sodium channel subunit beta.